Here is a 104-residue protein sequence, read N- to C-terminus: Large ribosomal subunit protein bL21 (104 aa).

The protein belongs to the bacterial ribosomal protein bL21 family. In terms of assembly, part of the 50S ribosomal subunit. Contacts protein L20.

Functionally, this protein binds to 23S rRNA in the presence of protein L20. The chain is Large ribosomal subunit protein bL21 from Salinispora tropica (strain ATCC BAA-916 / DSM 44818 / JCM 13857 / NBRC 105044 / CNB-440).